We begin with the raw amino-acid sequence, 141 residues long: UPF0310 protein Mflv_0785 (141 aa).

Belongs to the UPF0310 family.

In Mycolicibacterium gilvum (strain PYR-GCK) (Mycobacterium gilvum (strain PYR-GCK)), this protein is UPF0310 protein Mflv_0785.